Consider the following 98-residue polypeptide: Gibberellin-regulated protein 1 (98 aa).

The N-terminal stretch at 1 to 23 is a signal peptide; the sequence is MAISKALIASLLISLLVLQLVQA.

This sequence belongs to the GASA family. Post-translationally, six disulfide bonds may be present. Expressed in flower buds, style, stamen filaments, vasculature of sepals, flower abscission zone and green siliques. Lower levels seen in the root phloem, cotyledons and vasculature of rosette leaves.

The protein localises to the secreted. Its function is as follows. Gibberellin-regulated protein that may function in hormonal controlled steps of development such as seed germination, flowering and seed maturation. The polypeptide is Gibberellin-regulated protein 1 (GASA1) (Arabidopsis thaliana (Mouse-ear cress)).